A 93-amino-acid polypeptide reads, in one-letter code: SH3 domain-binding glutamic acid-rich-like protein 3 (93 aa).

N-acetylserine is present on Ser2. The Glutaredoxin domain occupies 2–93 (SGLRVYSTSV…NTLQEFLKLA (92 aa)). Thr9 is a glycosylation site (O-linked (GalNAc...) threonine).

Belongs to the SH3BGR family. In terms of assembly, homodimer. Interacts with MYO1C (via its IQ motifs); the interaction is dependent on calcium and takes place at membrane ruffles. Post-translationally, may be glycosylated.

The protein resides in the cytoplasm. It localises to the cytosol. Its subcellular location is the cell projection. It is found in the ruffle membrane. The protein localises to the nucleus. Its function is as follows. Could act as a modulator of glutaredoxin biological activity. May play a role in cytoskeleton organization. The protein is SH3 domain-binding glutamic acid-rich-like protein 3 (SH3BGRL3) of Bos taurus (Bovine).